The chain runs to 87 residues: Large ribosomal subunit protein bL27 (87 aa).

The tract at residues 1–21 (MAHKKAGGSSRNGRDSESKRL) is disordered.

Belongs to the bacterial ribosomal protein bL27 family.

The polypeptide is Large ribosomal subunit protein bL27 (Burkholderia mallei (strain NCTC 10247)).